The following is a 390-amino-acid chain: MSAAIVNAVKQCGYFNQGQCLSCRHIQQPLAQQVAVKTQTLQQLLAPFIPANSAELFLPPITGDDSGFRNKAKMVVLGAAHEPVLGIVSPSGEAVDLCDCLLYPGDMQALLHRLTRFVQQAGLPPYRVDKAKGELKFILLTRSQVRGEYLLRFVLRSHNGIERIERELPALLAEYPQIKVVSVNIQPIHMAILEGDEEIFLTENTRLEERFNHVPLFIRPKSFFQTNPQVAAQLYQTARDWVAEFSPRSLWDLFCGVGGFGLHCASNDITLTGIEIEAEAIACAQMSAQMMGLENVQFMALDSTDFAKGKSAADKPDLIIVNPPRRGIGEALCQSLSEFAPKAILYSSCNPKTLAKDLEHIQGYHLTKVQLFDLFPHTDHFEVLAMLVKD.

The [4Fe-4S] cluster site is built by C12, C20, C23, and C100. S-adenosyl-L-methionine-binding residues include Q225, F254, E275, and N322. C349 serves as the catalytic Nucleophile.

Belongs to the class I-like SAM-binding methyltransferase superfamily. RNA M5U methyltransferase family. RlmC subfamily.

It carries out the reaction uridine(747) in 23S rRNA + S-adenosyl-L-methionine = 5-methyluridine(747) in 23S rRNA + S-adenosyl-L-homocysteine + H(+). Catalyzes the formation of 5-methyl-uridine at position 747 (m5U747) in 23S rRNA. In Shewanella baltica (strain OS185), this protein is 23S rRNA (uracil(747)-C(5))-methyltransferase RlmC.